A 940-amino-acid polypeptide reads, in one-letter code: BTB/POZ domain-containing protein FBL11 (940 aa).

In terms of domain architecture, BTB spans 41–109; the sequence is WDMSEILSYG…LYGYDIEITS (69 aa). The BACK domain occupies 155 to 258; sequence IQIWSFGLEH…FSLLPLWFIA (104 aa).

It functions in the pathway protein modification; protein ubiquitination. Functionally, may act as a substrate-specific adapter of an E3 ubiquitin-protein ligase complex (CUL3-RBX1-BTB) which mediates the ubiquitination and subsequent proteasomal degradation of target proteins. The protein is BTB/POZ domain-containing protein FBL11 (FBL11) of Arabidopsis thaliana (Mouse-ear cress).